A 466-amino-acid polypeptide reads, in one-letter code: Endoglucanase E-5 (466 aa).

Residues 1-36 (MAKSPAARKGXPPVAVAVTAALALLIALLSPGVAQA) form the signal peptide. One can recognise a CBM2 domain in the interval 37–139 (AGLTATVTKE…TINGAPCDEG (103 aa)). Residues 129 to 166 (CTINGAPCDEGSEPGGPGGPGTPSPDPGTQPGTGTPVE) form a disordered region. The active-site Proton donor is the E299. E391 functions as the Nucleophile in the catalytic mechanism.

It belongs to the glycosyl hydrolase 5 (cellulase A) family.

It carries out the reaction Endohydrolysis of (1-&gt;4)-beta-D-glucosidic linkages in cellulose, lichenin and cereal beta-D-glucans.. It participates in glycan metabolism; cellulose degradation. The sequence is that of Endoglucanase E-5 (celE) from Thermobifida fusca (Thermomonospora fusca).